The chain runs to 313 residues: Phosphate import ATP-binding protein PstB 2 (313 aa).

Residues 1–33 (MSDSINTEPSTDTQTNGERTVETTSPSAETTAG) show a composition bias toward polar residues. The tract at residues 1-40 (MSDSINTEPSTDTQTNGERTVETTSPSAETTAGESEEQVR) is disordered. The 255-residue stretch at 54-308 (LSVENLDVWY…PESQRVEDYI (255 aa)) folds into the ABC transporter domain. 86–93 (GPSGCGKS) contacts ATP.

This sequence belongs to the ABC transporter superfamily. Phosphate importer (TC 3.A.1.7) family. In terms of assembly, the complex is composed of two ATP-binding proteins (PstB), two transmembrane proteins (PstC and PstA) and a solute-binding protein (PstS).

Its subcellular location is the cell membrane. It catalyses the reaction phosphate(out) + ATP + H2O = ADP + 2 phosphate(in) + H(+). Functionally, part of the ABC transporter complex PstSACB involved in phosphate import. Responsible for energy coupling to the transport system. The protein is Phosphate import ATP-binding protein PstB 2 of Haloarcula marismortui (strain ATCC 43049 / DSM 3752 / JCM 8966 / VKM B-1809) (Halobacterium marismortui).